A 242-amino-acid chain; its full sequence is Megakaryocyte and platelet inhibitory receptor G6b (242 aa).

An N-terminal signal peptide occupies residues 1–17; the sequence is MALVLPLLPLLLSKVQG. N-linked (GlcNAc...) asparagine glycosylation is found at Asn32 and Asn112. A helical membrane pass occupies residues 141–161; it reads VLIPLLGVGLVLGLGVAGVVW. 2 short sequence motifs (ITIM motif) span residues 210 to 215 and 236 to 241; these read LHYADL and TVYAVV. Tyr212 bears the Phosphotyrosine mark.

Interacts (via ITIM motif) with PTPN6 and PTPN11. Binds to heparin. In terms of processing, N-glycosylated. May be O-glycosylated. Post-translationally, phosphorylated. Expressed in mature megakaryocytes and platelets. Not expressed by immature megakaryocytes.

The protein localises to the cell membrane. Its function is as follows. Inhibitory receptor that acts as a critical regulator of hematopoietic lineage differentiation, megakaryocyte function and platelet production. Inhibits platelet aggregation and activation by agonists such as ADP and collagen-related peptide. This regulation of megakaryocate function as well as platelet production ann activation is done through the inhibition (via the 2 ITIM motifs) of the receptors CLEC1B and GP6:FcRgamma signaling. Appears to operate in a calcium-independent manner. In Mus musculus (Mouse), this protein is Megakaryocyte and platelet inhibitory receptor G6b.